Reading from the N-terminus, the 346-residue chain is Putative aminopeptidase YhfE (346 aa).

A divalent metal cation contacts are provided by His-68 and Asp-185. The active-site Proton acceptor is Glu-219. The a divalent metal cation site is built by Glu-220, Asp-240, and His-320.

Belongs to the peptidase M42 family. Requires a divalent metal cation as cofactor.

The polypeptide is Putative aminopeptidase YhfE (yhfE) (Bacillus subtilis (strain 168)).